Consider the following 252-residue polypeptide: Small ribosomal subunit protein uS2 (252 aa).

Belongs to the universal ribosomal protein uS2 family.

This Chlorobium phaeobacteroides (strain DSM 266 / SMG 266 / 2430) protein is Small ribosomal subunit protein uS2.